Reading from the N-terminus, the 221-residue chain is Histone H1.3 (221 aa).

Positions Met-1–Lys-17 are enriched in low complexity. Positions Met-1 to Ser-42 are disordered. Position 2 is an N-acetylserine (Ser-2). Ser-2 is subject to Phosphoserine. Lys-17 is modified (N6-acetyllysine). Thr-18 bears the Phosphothreonine mark. Basic residues predominate over residues Val-20–Ala-36. 2 positions are modified to N6-(beta-hydroxybutyryl)lysine: Lys-35 and Lys-53. The H15 domain occupies Ser-37–Lys-110. Arg-55 bears the Citrulline mark. N6-(beta-hydroxybutyryl)lysine is present on residues Lys-65, Lys-86, and Lys-91. A disordered region spans residues Ser-87–Lys-221. At Ser-105 the chain carries Phosphoserine; by PKC. Lys-107 carries the N6-(beta-hydroxybutyryl)lysine modification. Basic residues-rich tracts occupy residues Lys-120–Lys-141, Lys-150–Lys-161, Lys-170–Thr-187, and Lys-194–Lys-221.

It belongs to the histone H1/H5 family. Post-translationally, H1 histones are progressively phosphorylated during the cell cycle, becoming maximally phosphorylated during late G2 phase and M phase, and being dephosphorylated sharply thereafter. Citrullination at Arg-55 (H1R54ci) by PADI4 takes place within the DNA-binding site of H1 and results in its displacement from chromatin and global chromatin decondensation, thereby promoting pluripotency and stem cell maintenance.

The protein localises to the nucleus. It is found in the chromosome. H1 histones bind to linker DNA between nucleosomes forming the macromolecular structure known as the chromatin fiber. H1 histones are necessary for the condensation of nucleosome chains into higher-order structured fibers. Also acts as a regulator of individual gene transcription through chromatin remodeling, nucleosome spacing and DNA methylation. This chain is Histone H1.3, found in Bos taurus (Bovine).